Consider the following 2226-residue polypeptide: Rotatin (2226 aa).

The tract at residues 295-346 is disordered; the sequence is EARGPYHSPNPSPGSSSSRPSVVGRTGQRPRGDGQDWDAVSSSGSSSHTHVN. The segment covering 307-319 has biased composition (low complexity); the sequence is PGSSSSRPSVVGR. Serine 311 is modified (phosphoserine). N6-acetyllysine is present on lysine 813.

Belongs to the rotatin family. In terms of assembly, interacts with PPP1R35; this interaction allows the mutual recruitment to the centriole.

Its subcellular location is the cytoplasm. It localises to the cytoskeleton. The protein localises to the cilium basal body. Functionally, involved in the genetic cascade that governs left-right specification. Required for correct asymmetric expression of NODAL, LEFTY and PITX2. The polypeptide is Rotatin (Mus musculus (Mouse)).